Consider the following 206-residue polypeptide: MARYLGPKCKLSRREGTDLFLKSGVKANDEKCKMNTAPGQHGARRARLSDYGLQLREKQKVRRMYGILEGQFKKYYVEASRRKGNTGATLLELLESRLDNVVYRMGFAATRAEARQLVVHKGIMVNGHTCNVPSAQVKVGDVVAVREKAKKQLRIQNAVELAKHRKELSWIDVNTDSLEGTMKSSPDRSELSADINEQLIIELYSK.

Positions 96 to 158 (SRLDNVVYRM…AKKQLRIQNA (63 aa)) constitute an S4 RNA-binding domain.

This sequence belongs to the universal ribosomal protein uS4 family. In terms of assembly, part of the 30S ribosomal subunit. Contacts protein S5. The interaction surface between S4 and S5 is involved in control of translational fidelity.

Functionally, one of the primary rRNA binding proteins, it binds directly to 16S rRNA where it nucleates assembly of the body of the 30S subunit. In terms of biological role, with S5 and S12 plays an important role in translational accuracy. The chain is Small ribosomal subunit protein uS4 from Francisella tularensis subsp. holarctica (strain OSU18).